The chain runs to 190 residues: Interferon alpha-9 (190 aa).

An N-terminal signal peptide occupies residues 1–23; that stretch reads MARPFAFLMVLVVISYWSTCSLG. 2 disulfide bridges follow: Cys24/Cys122 and Cys52/Cys162. Asn101 carries an N-linked (GlcNAc...) asparagine glycan.

Belongs to the alpha/beta interferon family.

Its subcellular location is the secreted. Produced by macrophages, IFN-alpha have antiviral activities. Interferon stimulates the production of two enzymes: a protein kinase and an oligoadenylate synthetase. The sequence is that of Interferon alpha-9 (Ifna9) from Mus musculus (Mouse).